A 367-amino-acid chain; its full sequence is 2-aminoethylphosphonate--pyruvate transaminase (367 aa).

N6-(pyridoxal phosphate)lysine is present on lysine 194.

This sequence belongs to the class-V pyridoxal-phosphate-dependent aminotransferase family. PhnW subfamily. In terms of assembly, homodimer. It depends on pyridoxal 5'-phosphate as a cofactor.

It catalyses the reaction (2-aminoethyl)phosphonate + pyruvate = phosphonoacetaldehyde + L-alanine. Its function is as follows. Involved in phosphonate degradation. This chain is 2-aminoethylphosphonate--pyruvate transaminase, found in Salmonella paratyphi A (strain ATCC 9150 / SARB42).